A 986-amino-acid polypeptide reads, in one-letter code: Ephrin type-B receptor 2 (986 aa).

An N-terminal signal peptide occupies residues 1–18; it reads MAVRRLGAALLLLPLLAA. Topologically, residues 19 to 543 are extracellular; sequence VEETLMDSTT…QTSIKEKLPL (525 aa). The Eph LBD domain occupies 20–202; the sequence is EETLMDSTTA…FYRKCPRIIQ (183 aa). Intrachain disulfides connect Cys62–Cys184 and Cys97–Cys107. 4 N-linked (GlcNAc...) asparagine glycosylation sites follow: Asn265, Asn336, Asn428, and Asn482. Fibronectin type-III domains lie at 324–434 and 435–530; these read IPSA…TNQA and APSA…TMTE. A helical transmembrane segment spans residues 544–564; that stretch reads IVGSSAAGLVFLIAVVVIAIV. At 565–986 the chain is on the cytoplasmic side; the sequence is CNRRGFERAD…QMNQIQSVEV (422 aa). Residues 621-884 form the Protein kinase domain; the sequence is VKIEQVIGAG…QIVNTLDKMI (264 aa). Residues 627–635 and Lys653 contribute to the ATP site; that span reads IGAGEFGEV. Catalysis depends on Asp746, which acts as the Proton acceptor. Residue Lys891 forms a Glycyl lysine isopeptide (Lys-Gly) (interchain with G-Cter in ubiquitin) linkage. In terms of domain architecture, SAM spans 913–977; it reads TSFNTVDEWL…LNSIQVMRAQ (65 aa). The PDZ-binding signature appears at 984 to 986; the sequence is VEV.

Belongs to the protein kinase superfamily. Tyr protein kinase family. Ephrin receptor subfamily. As to quaternary structure, heterotetramer upon binding of the ligand. The heterotetramer is composed of an ephrin dimer and a receptor dimer. Interacts (via PDZ-binding motif) with GRIP1 and PICK1 (via PDZ domain). Interacts with ARHGEF15; mediates ARHGEF15 phosphorylation, ubiquitination and degradation by the proteasome. Interacts with AQP1; involved in endolymph production in the inner ear. Interacts with EFNA5. Interacts with SPSB1. Interacts with SPSB4. Interacts with SH2D3C. In terms of processing, autophosphorylated; ligand binding stimulates autophosphorylation on tyrosine residues. Ligand binding induces cleavage by matrix metalloproteinases (MMPs) such as MMP7/MMP9, producing an EphB2/N-terminal fragment (NTF) and a C-terminal long fragment (EphB2-LF). EphB2-LF is further cleaved by MMPs, producing EphB2/CTF1 which is further cleaved by the PS1/gamma-secretase producing EphB2/CTF2. Post-translationally, polyubiquitinated; ligand binding stimulates ubiquitination. Ubiquitinated by RNF186 at Lys-891, mainly through 'Lys-27'-linked polyubiquitin chains. Ubiquitinated by CRL2(KLHDC2) E3 ligase complex. In terms of tissue distribution, expressed in the epithelial dark cells of the inner ear. Expressed in the region of the proximal tubules of the kidney nephron. Expressed in myogenic progenitor cells.

The protein resides in the cell membrane. It is found in the cell projection. It localises to the axon. Its subcellular location is the dendrite. The enzyme catalyses L-tyrosyl-[protein] + ATP = O-phospho-L-tyrosyl-[protein] + ADP + H(+). Receptor tyrosine kinase which binds promiscuously transmembrane ephrin-B family ligands residing on adjacent cells, leading to contact-dependent bidirectional signaling into neighboring cells. The signaling pathway downstream of the receptor is referred to as forward signaling while the signaling pathway downstream of the ephrin ligand is referred to as reverse signaling. Functions in axon guidance during development. Involved in the guidance of commissural axons, that form a major interhemispheric connection between the 2 temporal lobes of the cerebral cortex. Also involved in guidance of contralateral inner ear efferent growth cones at the midline and of retinal ganglion cell axons to the optic disk. In addition to axon guidance, also regulates dendritic spines development and maturation and stimulates the formation of excitatory synapses. Upon activation by EFNB1, abolishes the ARHGEF15-mediated negative regulation on excitatory synapse formation. Controls other aspects of development including angiogenesis, palate development and in inner ear development through regulation of endolymph production. Forward and reverse signaling through the EFNB2/EPHB2 complex regulate movement and adhesion of cells that tubularize the urethra and septate the cloaca. May function as a tumor suppressor. May be involved in the regulation of platelet activation and blood coagulation. The protein is Ephrin type-B receptor 2 of Mus musculus (Mouse).